Consider the following 334-residue polypeptide: Uracil-DNA glycosylase (334 aa).

Positions 1 to 17 (MKRACSRSPSPRRRPSS) are enriched in basic residues. Disordered regions lie at residues 1–63 (MKRA…CRSS) and 79–104 (VTFSSSAPPDPPMDLTNGGVSPAATS). Residues 40 to 50 (GASNDASTETR) show a composition bias toward polar residues. Asp178 functions as the Proton acceptor in the catalytic mechanism.

Belongs to the uracil-DNA glycosylase (UDG) superfamily. UNG family.

It localises to the host nucleus. It carries out the reaction Hydrolyzes single-stranded DNA or mismatched double-stranded DNA and polynucleotides, releasing free uracil.. Its function is as follows. Excises uracil residues from the DNA which can arise as a result of misincorporation of dUMP residues by DNA polymerase or deamination of cytosines. Therefore may reduce deleterious uracil incorporation into the viral genome, particularly in terminally differentiated cells which lack DNA repair enzymes. This Human herpesvirus 1 (strain 17) (HHV-1) protein is Uracil-DNA glycosylase.